The following is a 580-amino-acid chain: Tripeptidyl-peptidase sed5 (580 aa).

The interval Met-1–Val-21 is disordered. A Peptidase S53 domain is found at Arg-181–Ile-567. Residue Asn-236 is glycosylated (N-linked (GlcNAc...) asparagine). Active-site charge relay system residues include Glu-269, Asp-273, and Ser-479. Asp-523 and Ile-524 together coordinate Ca(2+). Residue Asn-529 is glycosylated (N-linked (GlcNAc...) asparagine). 3 residues coordinate Ca(2+): Gly-543, Gly-545, and Asp-547.

Ca(2+) is required as a cofactor.

It is found in the secreted. Its subcellular location is the extracellular space. It catalyses the reaction Release of an N-terminal tripeptide from a polypeptide.. Functionally, secreted tripeptidyl-peptidase which degrades proteins at acidic pHs and is involved in virulence. The chain is Tripeptidyl-peptidase sed5 (sed5) from Aspergillus fumigatus (strain ATCC MYA-4609 / CBS 101355 / FGSC A1100 / Af293) (Neosartorya fumigata).